We begin with the raw amino-acid sequence, 1368 residues long: DNA-directed RNA polymerase subunit beta (1368 aa).

It belongs to the RNA polymerase beta chain family. As to quaternary structure, the RNAP catalytic core consists of 2 alpha, 1 beta, 1 beta' and 1 omega subunit. When a sigma factor is associated with the core the holoenzyme is formed, which can initiate transcription.

The catalysed reaction is RNA(n) + a ribonucleoside 5'-triphosphate = RNA(n+1) + diphosphate. DNA-dependent RNA polymerase catalyzes the transcription of DNA into RNA using the four ribonucleoside triphosphates as substrates. The sequence is that of DNA-directed RNA polymerase subunit beta from Cupriavidus taiwanensis (strain DSM 17343 / BCRC 17206 / CCUG 44338 / CIP 107171 / LMG 19424 / R1) (Ralstonia taiwanensis (strain LMG 19424)).